A 430-amino-acid polypeptide reads, in one-letter code: Spermatogenic leucine zipper protein 1 (430 aa).

Positions 1 to 25 (MASSAKSAEMPTISKTVNPTPDPHQ) are disordered. The stretch at 62–102 (EQQTAQKFNNLLKEIKDILKNMAGFEEKITEAKELFEETNI) forms a coiled coil. Ser107 carries the phosphoserine modification. The tract at residues 166 to 177 (KINEMLSTNLPV) is helix-loop-helix motif. The basic motif stretch occupies residues 178-244 (SLAPEKEDNE…NVQEETMKIR (67 aa)). Coiled-coil stretches lie at residues 214 to 269 (LEEK…KLIK) and 316 to 351 (SLQL…TLQE). Residue Ser258 is modified to Phosphoserine. A leucine-zipper region spans residues 303 to 324 (LEEQVKKLSHDTYSLQLMAALL).

As to quaternary structure, interacts with PPP1CC isoform gamma-2. Phosphorylated by MAPK1/ERK2 and MAPK3/ERK1. In terms of tissue distribution, specifically and strongly expressed in the testis. Expressed in several tumor cell lines.

Its subcellular location is the cytoplasm. It is found in the nucleus. Functionally, transcription factor that binds to the DNA sequence 5'-CANNTG-3'(E box) and the G-box motif. May play an important role in the regulation of cell proliferation and differentiation during spermatogenesis. This chain is Spermatogenic leucine zipper protein 1 (SPZ1), found in Homo sapiens (Human).